The following is a 209-amino-acid chain: Probable septum site-determining protein MinC (209 aa).

The protein belongs to the MinC family. Interacts with MinD and FtsZ.

Functionally, cell division inhibitor that blocks the formation of polar Z ring septums. Rapidly oscillates between the poles of the cell to destabilize FtsZ filaments that have formed before they mature into polar Z rings. Prevents FtsZ polymerization. In Clostridium kluyveri (strain NBRC 12016), this protein is Probable septum site-determining protein MinC.